The following is a 278-amino-acid chain: NADPH-dependent 7-cyano-7-deazaguanine reductase (278 aa).

87–89 is a substrate binding site; the sequence is IES. 89–90 is an NADPH binding site; the sequence is SK. C185 (thioimide intermediate) is an active-site residue. The active-site Proton donor is D192. Position 224–225 (224–225) interacts with substrate; sequence HE. 253 to 254 lines the NADPH pocket; it reads RG. The segment at 255 to 278 is disordered; that stretch reads GLDINPYRSTNPTFSVQNHRSFRQ. Polar residues predominate over residues 261 to 278; the sequence is YRSTNPTFSVQNHRSFRQ.

Belongs to the GTP cyclohydrolase I family. QueF type 2 subfamily. As to quaternary structure, homodimer.

Its subcellular location is the cytoplasm. It catalyses the reaction 7-aminomethyl-7-carbaguanine + 2 NADP(+) = 7-cyano-7-deazaguanine + 2 NADPH + 3 H(+). It participates in tRNA modification; tRNA-queuosine biosynthesis. Functionally, catalyzes the NADPH-dependent reduction of 7-cyano-7-deazaguanine (preQ0) to 7-aminomethyl-7-deazaguanine (preQ1). The sequence is that of NADPH-dependent 7-cyano-7-deazaguanine reductase from Coxiella burnetii (strain CbuK_Q154) (Coxiella burnetii (strain Q154)).